The primary structure comprises 168 residues: Endoribonuclease YbeY (168 aa).

Residues His-126, His-130, and His-136 each coordinate Zn(2+).

This sequence belongs to the endoribonuclease YbeY family. Requires Zn(2+) as cofactor.

The protein localises to the cytoplasm. Its function is as follows. Single strand-specific metallo-endoribonuclease involved in late-stage 70S ribosome quality control and in maturation of the 3' terminus of the 16S rRNA. The chain is Endoribonuclease YbeY from Sinorhizobium medicae (strain WSM419) (Ensifer medicae).